A 776-amino-acid polypeptide reads, in one-letter code: Protein SEY1 (776 aa).

Over 1–681 (MADRSAIQLI…KRSIITTRTH (681 aa)) the chain is Cytoplasmic. Positions 34–263 (GLDYHVISVF…TENYYFKPQY (230 aa)) constitute a GB1/RHD3-type G domain. GTP is bound at residue 44 to 51 (GSQSSGKS). The helical transmembrane segment at 682–702 (IPPWIYVLLAVLGWNEFVAVI) threads the bilayer. At 703-705 (RNP) the chain is on the lumenal side. The helical transmembrane segment at 706-726 (LFVTLTLILGATFFVIHKFGL) threads the bilayer. Topologically, residues 727–776 (WGPVVNVVQSAVGETRTAIKDKLRQFVVEDHEVKESFEMKDFSKNEQKEK) are cytoplasmic.

It belongs to the TRAFAC class dynamin-like GTPase superfamily. GB1/RHD3 GTPase family. RHD3 subfamily. As to quaternary structure, interacts with RTN1 and YOP1; GTP binding is not required for these interactions.

It is found in the endoplasmic reticulum membrane. In terms of biological role, cooperates with the reticulon proteins RTN1 and RTN2 and the tubule-shaping DP1 family protein YOP1 to generate and maintain the structure of the tubular endoplasmic reticulum network. Has GTPase activity, which is required for its function in ER organization. This Saccharomyces cerevisiae (strain RM11-1a) (Baker's yeast) protein is Protein SEY1.